We begin with the raw amino-acid sequence, 148 residues long: Snaclec B2 (148 aa).

An N-terminal signal peptide occupies residues 1 to 24 (MGRLISVSFGLLVVFLSLSGTGAA). 3 disulfides stabilise this stretch: C27–C38, C55–C144, and C121–C136. One can recognise a C-type lectin domain in the interval 34-145 (YDQHCYKVFD…CRLLGHFVCK (112 aa)).

Belongs to the snaclec family. As to quaternary structure, heterodimer; disulfide-linked. Expressed by the venom gland.

Its subcellular location is the secreted. Its function is as follows. Interferes with one step of hemostasis (modulation of platelet aggregation, or coagulation cascade, for example). This is Snaclec B2 from Macrovipera lebetinus (Levantine viper).